A 710-amino-acid polypeptide reads, in one-letter code: Probable thimet oligopeptidase (710 aa).

Histidine 502 contacts Zn(2+). Glutamate 503 is an active-site residue. Histidine 506 is a binding site for Zn(2+).

Belongs to the peptidase M3 family. Requires Zn(2+) as cofactor.

The protein resides in the cytoplasm. The enzyme catalyses Preferential cleavage of bonds with hydrophobic residues at P1, P2 and P3' and a small residue at P1' in substrates of 5 to 15 residues.. Functionally, involved in cytoplasmic peptide degradation. In Arabidopsis thaliana (Mouse-ear cress), this protein is Probable thimet oligopeptidase.